A 327-amino-acid polypeptide reads, in one-letter code: Phenylalanine--tRNA ligase alpha subunit (327 aa).

Glu252 contributes to the Mg(2+) binding site.

The protein belongs to the class-II aminoacyl-tRNA synthetase family. Phe-tRNA synthetase alpha subunit type 1 subfamily. Tetramer of two alpha and two beta subunits. The cofactor is Mg(2+).

The protein resides in the cytoplasm. It carries out the reaction tRNA(Phe) + L-phenylalanine + ATP = L-phenylalanyl-tRNA(Phe) + AMP + diphosphate + H(+). This Shewanella baltica (strain OS185) protein is Phenylalanine--tRNA ligase alpha subunit.